The sequence spans 146 residues: Decoration protein (146 aa).

In terms of assembly, homotrimer. Interacts with the major capsid protein.

The protein localises to the virion. Functionally, cooperatively binds the expanded capsid, thereby stabilizing the mature capsid shell and allowing the large viral DNA to be packaged. Trimers of capsid decoration proteins molecules are located at local and icosahedral threefold axes and stabilize the expanded capsid, which shows increased spacing between capsomers. The protein is Decoration protein of Thermus thermophilus (Thermus thermophilus phage P23-45).